The primary structure comprises 418 residues: Adenosylhomocysteinase (418 aa).

3 residues coordinate substrate: T53, D125, and E150. 151–153 serves as a coordination point for NAD(+); sequence TTT. The substrate site is built by K180 and D184. NAD(+) contacts are provided by residues N185, 214-219, E237, N272, 293-295, and N340; these read GYGWCG and SGH.

Belongs to the adenosylhomocysteinase family. NAD(+) serves as cofactor.

Its subcellular location is the cytoplasm. It catalyses the reaction S-adenosyl-L-homocysteine + H2O = L-homocysteine + adenosine. It functions in the pathway amino-acid biosynthesis; L-homocysteine biosynthesis; L-homocysteine from S-adenosyl-L-homocysteine: step 1/1. May play a key role in the regulation of the intracellular concentration of adenosylhomocysteine. In Aquifex aeolicus (strain VF5), this protein is Adenosylhomocysteinase.